A 51-amino-acid polypeptide reads, in one-letter code: U-Asilidin(1)-Eru1a (51 aa).

The first 23 residues, 1–23 (MANYIDVLSFLAIICATVLATLA), serve as a signal peptide directing secretion. 3 disulfides stabilise this stretch: Cys-26/Cys-40, Cys-33/Cys-44, and Cys-39/Cys-49.

The protein belongs to the asilidin-1 family. In terms of tissue distribution, expressed by the venom gland. The most highly expressed peptides U-Asilidin1-Mar1a is around 3000 times higher expressed in the venom thoracic glands compared to its body tissues.

It is found in the secreted. Induces neurotoxic effect on honeybees, including slow movements, disorientation and paralysis. Since it provokes similar symptoms than omega-atracotoxin, it is probable that it acts in the same way by inhibiting voltage-gated calcium channels. The sequence is that of U-Asilidin(1)-Eru1a from Eutolmus rufibarbis (Golden-tabbed robberfly).